Consider the following 141-residue polypeptide: Mitochondrial import inner membrane translocase subunit tim16 (141 aa).

The tract at residues 59 to 117 (EACKILNVNKPADGTAANMEEVMERFKRLFDANDPEKGGSFYLQSKVVRARERLEAEIK) is J-like. Positions 119–141 (KMEEKQAEEEVKEGWNPKIYKDR) are disordered.

The protein belongs to the TIM16/PAM16 family. Heterodimer with tim14/pam18. Component of the PAM complex, at least composed of hsp70-5/ssc1, grpe/mge1, tim44, un-4/pam16, pam17 and tim14/pam18.

Its subcellular location is the mitochondrion inner membrane. Its function is as follows. Essential component of the PAM complex, a complex required for the translocation of transit peptide-containing proteins from the inner membrane into the mitochondrial matrix in an ATP-dependent manner. In the complex, it is required to regulate activity of mtHSP70 (hsp70-5) via its interaction with tim14/pam18. May act by positioning tim14/pam18 in juxtaposition to mtHSP70 at the translocon to maximize ATPase stimulation. The polypeptide is Mitochondrial import inner membrane translocase subunit tim16 (un-4) (Neurospora crassa (strain ATCC 24698 / 74-OR23-1A / CBS 708.71 / DSM 1257 / FGSC 987)).